The sequence spans 143 residues: Large ribosomal subunit protein uL13 (143 aa).

It belongs to the universal ribosomal protein uL13 family. As to quaternary structure, part of the 50S ribosomal subunit.

Functionally, this protein is one of the early assembly proteins of the 50S ribosomal subunit, although it is not seen to bind rRNA by itself. It is important during the early stages of 50S assembly. The chain is Large ribosomal subunit protein uL13 from Variovorax paradoxus (strain S110).